The following is a 563-amino-acid chain: NAD-dependent malic enzyme (563 aa).

Tyr-101 functions as the Proton donor in the catalytic mechanism. Arg-154 serves as a coordination point for NAD(+). Residue Lys-172 is the Proton acceptor of the active site. Residues Glu-243, Asp-244, and Asp-267 each contribute to the a divalent metal cation site. NAD(+)-binding residues include Asp-267 and Asn-416.

It belongs to the malic enzymes family. In terms of assembly, homotetramer. Mg(2+) is required as a cofactor. Requires Mn(2+) as cofactor.

The enzyme catalyses (S)-malate + NAD(+) = pyruvate + CO2 + NADH. The catalysed reaction is oxaloacetate + H(+) = pyruvate + CO2. The protein is NAD-dependent malic enzyme of Pseudomonas syringae pv. syringae (strain B728a).